We begin with the raw amino-acid sequence, 283 residues long: Ribosomal RNA small subunit methyltransferase I (283 aa).

The protein belongs to the methyltransferase superfamily. RsmI family.

The protein resides in the cytoplasm. It catalyses the reaction cytidine(1402) in 16S rRNA + S-adenosyl-L-methionine = 2'-O-methylcytidine(1402) in 16S rRNA + S-adenosyl-L-homocysteine + H(+). Functionally, catalyzes the 2'-O-methylation of the ribose of cytidine 1402 (C1402) in 16S rRNA. This is Ribosomal RNA small subunit methyltransferase I from Haemophilus influenzae (strain ATCC 51907 / DSM 11121 / KW20 / Rd).